Reading from the N-terminus, the 127-residue chain is CST complex subunit TEN1 (127 aa).

The protein belongs to the TEN1 family. Component of the CST complex, composed of CTC1, TEN1 and STN1. Interacts with STN1. No interaction with POT1A, but competes with it for STN1 binding. As to expression, ubiquitous. High expression in meristematic tissues and in vasculature.

It is found in the nucleus. Its subcellular location is the chromosome. It localises to the telomere. Its function is as follows. Required for the maintenance of meristems and stem cells through the reduction of DNA damage. Promotes telomere integrity by maintaining telomere length and proper architecture of the chromosome terminus. Negatively regulates telomerase repeat addition processivity. Hampers contacts between enzymatically active telomerase and CST complex. This is CST complex subunit TEN1 from Arabidopsis thaliana (Mouse-ear cress).